The primary structure comprises 307 residues: MNNLPLLNDLRVFMLVARRAGFAAVAEELGVSPAFVSKRIALLEQTLNVVLLHRTTRRVTITEEGERIYEWAQRILQDVGQMMDELSDVRQVPQGMLRIISSFGFGRQVVAPALLALAKAYPQLELRFDVEDRLVDLVNEGVDLDIRIGDDIAPNLIARKLATNYRILCASPEFIAQHGAPKHLTDLSALPCLVIKERDHPFGVWQLRNKEGPHAIKVTGPLSSNHGEIVHQWCLDGQGIALRSWWDVSENIASGHLVQVLPEYYQPANVWAVYVSRLATSAKVRITVEFLRQYFAEHYPNFSLEHA.

The 58-residue stretch at 5–62 (PLLNDLRVFMLVARRAGFAAVAEELGVSPAFVSKRIALLEQTLNVVLLHRTTRRVTIT) folds into the HTH lysR-type domain. The segment at residues 22–41 (FAAVAEELGVSPAFVSKRIA) is a DNA-binding region (H-T-H motif).

The protein belongs to the LysR transcriptional regulatory family.

Its function is as follows. Transcriptional regulator required for the aerobic growth on D-malate as the sole carbon source. Induces the expression of dmlA in response to D-malate or L- or meso-tartrate. Negatively regulates its own expression. This Escherichia coli (strain K12) protein is HTH-type transcriptional regulator DmlR (dmlR).